We begin with the raw amino-acid sequence, 1202 residues long: DNA-directed RNA polymerase subunit beta (1202 aa).

Belongs to the RNA polymerase beta chain family. In terms of assembly, the RNAP catalytic core consists of 2 alpha, 1 beta, 1 beta' and 1 omega subunit. When a sigma factor is associated with the core the holoenzyme is formed, which can initiate transcription.

It catalyses the reaction RNA(n) + a ribonucleoside 5'-triphosphate = RNA(n+1) + diphosphate. Functionally, DNA-dependent RNA polymerase catalyzes the transcription of DNA into RNA using the four ribonucleoside triphosphates as substrates. In Leuconostoc mesenteroides subsp. mesenteroides (strain ATCC 8293 / DSM 20343 / BCRC 11652 / CCM 1803 / JCM 6124 / NCDO 523 / NBRC 100496 / NCIMB 8023 / NCTC 12954 / NRRL B-1118 / 37Y), this protein is DNA-directed RNA polymerase subunit beta.